Consider the following 136-residue polypeptide: Regulator of nucleoside diphosphate kinase (136 aa).

Belongs to the Rnk family. In terms of assembly, interacts with the RNA polymerase.

May act as an anti-Gre factor. This chain is Regulator of nucleoside diphosphate kinase, found in Escherichia coli O6:H1 (strain CFT073 / ATCC 700928 / UPEC).